Here is a 193-residue protein sequence, read N- to C-terminus: Dual-action ribosomal maturation protein DarP (193 aa).

Residues 1–10 show a composition bias toward basic and acidic residues; the sequence is MRGRDEDTGE. 2 disordered regions span residues 1–20 and 171–193; these read MRGRDEDTGEFRGASRSQQR and QEQGLESGDSGLEDGESALEDDE. A compositionally biased stretch (acidic residues) spans 181-193; sequence GLEDGESALEDDE.

This sequence belongs to the DarP family.

The protein localises to the cytoplasm. Its function is as follows. Member of a network of 50S ribosomal subunit biogenesis factors which assembles along the 30S-50S interface, preventing incorrect 23S rRNA structures from forming. Promotes peptidyl transferase center (PTC) maturation. The polypeptide is Dual-action ribosomal maturation protein DarP (Xanthomonas oryzae pv. oryzae (strain KACC10331 / KXO85)).